The sequence spans 602 residues: Non structural protein VP9' (602 aa).

It is found in the host cytoplasm. This chain is Non structural protein VP9', found in Callospermophilus lateralis (Golden-mantled ground squirrel).